Here is a 334-residue protein sequence, read N- to C-terminus: Putative ankyrin repeat protein RBE_0347 (334 aa).

ANK repeat units follow at residues 80 to 90, 91 to 120, 124 to 161, and 162 to 191; these read EQGINPNIQDS, SGNT…NPNI, SDNT…LKDF, and VGFT…DINV.

This is Putative ankyrin repeat protein RBE_0347 from Rickettsia bellii (strain RML369-C).